The following is an 825-amino-acid chain: Exocyst complex component SEC10a (825 aa).

Residues 244 to 266 (RGLEVAVANLQDYCNELENRLLS) are a coiled coil.

It belongs to the SEC10 family. As to quaternary structure, the exocyst complex is composed of SEC3, SEC5, SEC6, SEC8, SEC10, EXO70A1 and EXO84B. Interacts with EXO84B. Binds to EXO70E2. Binds directly to B1L. In terms of tissue distribution, expressed in seedlings, roots, leaves and flowers.

The protein resides in the cytoplasm. It is found in the cytosol. Its subcellular location is the secreted. The protein localises to the extracellular exosome. Its function is as follows. Component of the exocyst complex involved in the docking of exocytic vesicles with fusion sites on the plasma membrane during regulated or polarized secretion. Involved in polarized cell growth and organ morphogenesis. During cytokinesis, involved in cell plate initiation, cell plate maturation and formation of new primary cell wall. The polypeptide is Exocyst complex component SEC10a (Arabidopsis thaliana (Mouse-ear cress)).